We begin with the raw amino-acid sequence, 249 residues long: MVDRLANSEANTRRISIVENCFGAAGQPLTIPGRVLIGEGVLTKLCRKKPKARQFFLFNDILVYGNIVIQKKKYNKQHIIPLENVTIDSIQDEGDLRNGWLIKTPTKSFAVYAATATEKSEWMNHINKCVSDLLSKSGKTPSNEHAAVWVPDSEATVCMRCQKAKFTPVNRRHHCRKCGFVVCGPCSEKRFLLPSQSSKPVRICDSCYDLLSTGEMTACQSTRSDSYSQSPKSSLNDASDDDDDEDSSD.

Positions 35–131 constitute a PH domain; the sequence is VLIGEGVLTK…WMNHINKCVS (97 aa). Residues 152-212 form an FYVE-type zinc finger; sequence DSEATVCMRC…ICDSCYDLLS (61 aa). Residues C158, C161, C175, C178, C183, C186, C204, and C207 each coordinate Zn(2+). Over residues 219–232 the composition is skewed to polar residues; the sequence is CQSTRSDSYSQSPK. Residues 219–249 form a disordered region; that stretch reads CQSTRSDSYSQSPKSSLNDASDDDDDEDSSD. A compositionally biased stretch (acidic residues) spans 238-249; the sequence is ASDDDDDEDSSD.

Its subcellular location is the early endosome membrane. It localises to the endoplasmic reticulum. Functionally, may play a role in early endosome fusion upstream of RAB5, hence regulating receptor trafficking and fluid-phase transport. Enhances cellular sensitivity to TNF-induced apoptosis. The protein is Pleckstrin homology domain-containing family F member 2 (PLEKHF2) of Gallus gallus (Chicken).